Consider the following 500-residue polypeptide: Probable cytosol aminopeptidase (500 aa).

Residues Lys265 and Asp270 each coordinate Mn(2+). Lys277 is an active-site residue. 3 residues coordinate Mn(2+): Asp288, Asp347, and Glu349. Residue Arg351 is part of the active site.

It belongs to the peptidase M17 family. The cofactor is Mn(2+).

It localises to the cytoplasm. The enzyme catalyses Release of an N-terminal amino acid, Xaa-|-Yaa-, in which Xaa is preferably Leu, but may be other amino acids including Pro although not Arg or Lys, and Yaa may be Pro. Amino acid amides and methyl esters are also readily hydrolyzed, but rates on arylamides are exceedingly low.. It catalyses the reaction Release of an N-terminal amino acid, preferentially leucine, but not glutamic or aspartic acids.. Functionally, presumably involved in the processing and regular turnover of intracellular proteins. Catalyzes the removal of unsubstituted N-terminal amino acids from various peptides. The protein is Probable cytosol aminopeptidase of Rickettsia massiliae (strain Mtu5).